The primary structure comprises 321 residues: Lipoyl synthase (321 aa).

[4Fe-4S] cluster-binding residues include Cys-60, Cys-65, Cys-71, Cys-86, Cys-90, Cys-93, and Ser-299. The region spanning 72 to 288 is the Radical SAM core domain; sequence WEKKHATFMI…ETIGRTKGFL (217 aa).

The protein belongs to the radical SAM superfamily. Lipoyl synthase family. Requires [4Fe-4S] cluster as cofactor.

The protein resides in the cytoplasm. The catalysed reaction is [[Fe-S] cluster scaffold protein carrying a second [4Fe-4S](2+) cluster] + N(6)-octanoyl-L-lysyl-[protein] + 2 oxidized [2Fe-2S]-[ferredoxin] + 2 S-adenosyl-L-methionine + 4 H(+) = [[Fe-S] cluster scaffold protein] + N(6)-[(R)-dihydrolipoyl]-L-lysyl-[protein] + 4 Fe(3+) + 2 hydrogen sulfide + 2 5'-deoxyadenosine + 2 L-methionine + 2 reduced [2Fe-2S]-[ferredoxin]. Its pathway is protein modification; protein lipoylation via endogenous pathway; protein N(6)-(lipoyl)lysine from octanoyl-[acyl-carrier-protein]: step 2/2. Functionally, catalyzes the radical-mediated insertion of two sulfur atoms into the C-6 and C-8 positions of the octanoyl moiety bound to the lipoyl domains of lipoate-dependent enzymes, thereby converting the octanoylated domains into lipoylated derivatives. This is Lipoyl synthase from Brucella anthropi (strain ATCC 49188 / DSM 6882 / CCUG 24695 / JCM 21032 / LMG 3331 / NBRC 15819 / NCTC 12168 / Alc 37) (Ochrobactrum anthropi).